Consider the following 230-residue polypeptide: Heptaprenylglyceryl phosphate synthase (230 aa).

Lysine 12 lines the sn-glycerol 1-phosphate pocket. Aspartate 14 and threonine 40 together coordinate Mg(2+). Residues tyrosine 159–glycine 164, glycine 189, and glycine 209–aspartate 210 contribute to the sn-glycerol 1-phosphate site.

The protein belongs to the GGGP/HepGP synthase family. Group I subfamily. As to quaternary structure, homodimer. Requires Mg(2+) as cofactor.

It carries out the reaction sn-glycerol 1-phosphate + all-trans-heptaprenyl diphosphate = 3-heptaprenyl-sn-glycero-1-phosphate + diphosphate. The protein operates within membrane lipid metabolism; glycerophospholipid metabolism. Prenyltransferase that catalyzes in vivo the transfer of the heptaprenyl moiety of heptaprenyl pyrophosphate (HepPP; 35 carbon atoms) to the C3 hydroxyl of sn-glycerol-1-phosphate (G1P), producing heptaprenylglyceryl phosphate (HepGP). This reaction is an ether-bond-formation step in the biosynthesis of archaea-type G1P-based membrane lipids found in Bacillales. The protein is Heptaprenylglyceryl phosphate synthase of Staphylococcus epidermidis (strain ATCC 35984 / DSM 28319 / BCRC 17069 / CCUG 31568 / BM 3577 / RP62A).